We begin with the raw amino-acid sequence, 72 residues long: Large ribosomal subunit protein bL31 (72 aa).

Belongs to the bacterial ribosomal protein bL31 family. Type A subfamily. As to quaternary structure, part of the 50S ribosomal subunit.

Its function is as follows. Binds the 23S rRNA. The protein is Large ribosomal subunit protein bL31 of Deinococcus geothermalis (strain DSM 11300 / CIP 105573 / AG-3a).